An 85-amino-acid polypeptide reads, in one-letter code: U4-theraphotoxin-Hhn1a (85 aa).

Residues M1 to A22 form the signal peptide. Residues E23–R48 constitute a propeptide that is removed on maturation. Cystine bridges form between C52-C66, C56-C77, and C71-C82.

Belongs to the neurotoxin 12 (Hwtx-2) family. 02 (Hwtx-2) subfamily. In terms of assembly, monomer. In terms of tissue distribution, expressed by the venom gland.

It is found in the secreted. Neurotoxin active on both insects and mammals. The polypeptide is U4-theraphotoxin-Hhn1a (Cyriopagopus hainanus (Chinese bird spider)).